Here is a 262-residue protein sequence, read N- to C-terminus: MIHETAQIHPSAVIEGDVTIEANVSVGPFSYISGNVTIGEGTEVMSHVVIKGDTIIGKDNRIFSFAIIGEESQDKKYGGEATKVVVGDRNFIRESVQIHRGTVQDRGVTTVGNDNLLCVNVHIAHDCIVGSNIIMGNNATLAGHVTIEDYAIVSALSPVHQFCTVGAHSFIGGASVVVQDVPPFVMAQGNHCKPFGINIEGLKRRGFEKPEIHAIRRAYKALYRNGNTLEEAKEEIKTEIEAFPVLQGFLDLFEKSTRGIIR.

Belongs to the transferase hexapeptide repeat family. LpxA subfamily. As to quaternary structure, homotrimer.

It localises to the cytoplasm. The enzyme catalyses a (3R)-hydroxyacyl-[ACP] + UDP-N-acetyl-alpha-D-glucosamine = a UDP-3-O-[(3R)-3-hydroxyacyl]-N-acetyl-alpha-D-glucosamine + holo-[ACP]. The protein operates within glycolipid biosynthesis; lipid IV(A) biosynthesis; lipid IV(A) from (3R)-3-hydroxytetradecanoyl-[acyl-carrier-protein] and UDP-N-acetyl-alpha-D-glucosamine: step 1/6. Involved in the biosynthesis of lipid A, a phosphorylated glycolipid that anchors the lipopolysaccharide to the outer membrane of the cell. The sequence is that of Acyl-[acyl-carrier-protein]--UDP-N-acetylglucosamine O-acyltransferase from Aliivibrio salmonicida (strain LFI1238) (Vibrio salmonicida (strain LFI1238)).